The sequence spans 424 residues: Histidine--tRNA ligase (424 aa).

Belongs to the class-II aminoacyl-tRNA synthetase family. As to quaternary structure, homodimer.

Its subcellular location is the cytoplasm. It carries out the reaction tRNA(His) + L-histidine + ATP = L-histidyl-tRNA(His) + AMP + diphosphate + H(+). This Escherichia coli O17:K52:H18 (strain UMN026 / ExPEC) protein is Histidine--tRNA ligase.